The chain runs to 355 residues: 3-dehydroquinate synthase (355 aa).

NAD(+)-binding positions include 69-74 (DGEQHK), 103-107 (GVIGD), 127-128 (TT), Lys-140, Lys-149, and 167-170 (TLQT). Zn(2+)-binding residues include Glu-182, His-245, and His-262.

It belongs to the sugar phosphate cyclases superfamily. Dehydroquinate synthase family. Co(2+) is required as a cofactor. The cofactor is Zn(2+). NAD(+) serves as cofactor.

Its subcellular location is the cytoplasm. The catalysed reaction is 7-phospho-2-dehydro-3-deoxy-D-arabino-heptonate = 3-dehydroquinate + phosphate. The protein operates within metabolic intermediate biosynthesis; chorismate biosynthesis; chorismate from D-erythrose 4-phosphate and phosphoenolpyruvate: step 2/7. In terms of biological role, catalyzes the conversion of 3-deoxy-D-arabino-heptulosonate 7-phosphate (DAHP) to dehydroquinate (DHQ). This Pseudoalteromonas atlantica (strain T6c / ATCC BAA-1087) protein is 3-dehydroquinate synthase.